The chain runs to 349 residues: GMP reductase (349 aa).

108–131 (IDFLKIKKIFLLSSELKYICIDVA) lines the NADP(+) pocket. K(+)-binding residues include G181 and G183. C186 (thioimidate intermediate) is an active-site residue. 216–239 (IISDGGCTVSGDIAKAFGGGADFV) is a binding site for NADP(+).

The protein belongs to the IMPDH/GMPR family. GuaC type 1 subfamily. In terms of assembly, homotetramer.

It catalyses the reaction IMP + NH4(+) + NADP(+) = GMP + NADPH + 2 H(+). Functionally, catalyzes the irreversible NADPH-dependent deamination of GMP to IMP. It functions in the conversion of nucleobase, nucleoside and nucleotide derivatives of G to A nucleotides, and in maintaining the intracellular balance of A and G nucleotides. This is GMP reductase from Buchnera aphidicola subsp. Acyrthosiphon pisum (strain Tuc7).